We begin with the raw amino-acid sequence, 300 residues long: 4-hydroxy-tetrahydrodipicolinate synthase (300 aa).

A pyruvate-binding site is contributed by Thr49. Tyr137 serves as the catalytic Proton donor/acceptor. The active-site Schiff-base intermediate with substrate is the Lys166. Ile208 provides a ligand contact to pyruvate.

It belongs to the DapA family. In terms of assembly, homotetramer; dimer of dimers.

The protein localises to the cytoplasm. It carries out the reaction L-aspartate 4-semialdehyde + pyruvate = (2S,4S)-4-hydroxy-2,3,4,5-tetrahydrodipicolinate + H2O + H(+). Its pathway is amino-acid biosynthesis; L-lysine biosynthesis via DAP pathway; (S)-tetrahydrodipicolinate from L-aspartate: step 3/4. Catalyzes the condensation of (S)-aspartate-beta-semialdehyde [(S)-ASA] and pyruvate to 4-hydroxy-tetrahydrodipicolinate (HTPA). This chain is 4-hydroxy-tetrahydrodipicolinate synthase, found in Methanopyrus kandleri (strain AV19 / DSM 6324 / JCM 9639 / NBRC 100938).